The primary structure comprises 342 residues: N-acetyl-gamma-glutamyl-phosphate reductase (342 aa).

Cys-149 is an active-site residue.

This sequence belongs to the NAGSA dehydrogenase family. Type 1 subfamily.

The protein resides in the cytoplasm. The enzyme catalyses N-acetyl-L-glutamate 5-semialdehyde + phosphate + NADP(+) = N-acetyl-L-glutamyl 5-phosphate + NADPH + H(+). It participates in amino-acid biosynthesis; L-arginine biosynthesis; N(2)-acetyl-L-ornithine from L-glutamate: step 3/4. In terms of biological role, catalyzes the NADPH-dependent reduction of N-acetyl-5-glutamyl phosphate to yield N-acetyl-L-glutamate 5-semialdehyde. This chain is N-acetyl-gamma-glutamyl-phosphate reductase, found in Cereibacter sphaeroides (strain ATCC 17025 / ATH 2.4.3) (Rhodobacter sphaeroides).